We begin with the raw amino-acid sequence, 570 residues long: Methionine--tRNA ligase (570 aa).

Positions Pro14–Asn24 match the 'HIGH' region motif. Zn(2+) is bound by residues Cys146, Cys149, Cys159, and Cys162. Residues Gln347–Ser351 carry the 'KMSKS' region motif. Thr350 is an ATP binding site.

This sequence belongs to the class-I aminoacyl-tRNA synthetase family. MetG type 1 subfamily. As to quaternary structure, monomer. Requires Zn(2+) as cofactor.

It localises to the cytoplasm. It carries out the reaction tRNA(Met) + L-methionine + ATP = L-methionyl-tRNA(Met) + AMP + diphosphate. In terms of biological role, is required not only for elongation of protein synthesis but also for the initiation of all mRNA translation through initiator tRNA(fMet) aminoacylation. This chain is Methionine--tRNA ligase, found in Jannaschia sp. (strain CCS1).